Reading from the N-terminus, the 250-residue chain is Probable transcriptional regulatory protein tll0175 (250 aa).

The protein belongs to the TACO1 family.

The protein localises to the cytoplasm. The polypeptide is Probable transcriptional regulatory protein tll0175 (Thermosynechococcus vestitus (strain NIES-2133 / IAM M-273 / BP-1)).